A 586-amino-acid polypeptide reads, in one-letter code: Chaperone protein HscA homolog (586 aa).

Belongs to the heat shock protein 70 family.

Functionally, chaperone involved in the maturation of iron-sulfur cluster-containing proteins. Has a low intrinsic ATPase activity which is markedly stimulated by HscB. The polypeptide is Chaperone protein HscA homolog (Rickettsia typhi (strain ATCC VR-144 / Wilmington)).